The chain runs to 448 residues: Exodeoxyribonuclease 7 large subunit (448 aa).

This sequence belongs to the XseA family. As to quaternary structure, heterooligomer composed of large and small subunits.

The protein localises to the cytoplasm. The enzyme catalyses Exonucleolytic cleavage in either 5'- to 3'- or 3'- to 5'-direction to yield nucleoside 5'-phosphates.. In terms of biological role, bidirectionally degrades single-stranded DNA into large acid-insoluble oligonucleotides, which are then degraded further into small acid-soluble oligonucleotides. This Histophilus somni (strain 129Pt) (Haemophilus somnus) protein is Exodeoxyribonuclease 7 large subunit.